A 251-amino-acid chain; its full sequence is Hydroxyacylglutathione hydrolase (251 aa).

Residues H54, H56, D58, H59, H113, D140, and H178 each contribute to the Zn(2+) site.

Belongs to the metallo-beta-lactamase superfamily. Glyoxalase II family. In terms of assembly, monomer. Requires Zn(2+) as cofactor.

The enzyme catalyses an S-(2-hydroxyacyl)glutathione + H2O = a 2-hydroxy carboxylate + glutathione + H(+). The protein operates within secondary metabolite metabolism; methylglyoxal degradation; (R)-lactate from methylglyoxal: step 2/2. Thiolesterase that catalyzes the hydrolysis of S-D-lactoyl-glutathione to form glutathione and D-lactic acid. The chain is Hydroxyacylglutathione hydrolase from Synechococcus sp. (strain CC9902).